A 211-amino-acid chain; its full sequence is Probable nicotinate-nucleotide adenylyltransferase (211 aa).

Belongs to the NadD family.

It catalyses the reaction nicotinate beta-D-ribonucleotide + ATP + H(+) = deamido-NAD(+) + diphosphate. Its pathway is cofactor biosynthesis; NAD(+) biosynthesis; deamido-NAD(+) from nicotinate D-ribonucleotide: step 1/1. In terms of biological role, catalyzes the reversible adenylation of nicotinate mononucleotide (NaMN) to nicotinic acid adenine dinucleotide (NaAD). This Gemmatimonas aurantiaca (strain DSM 14586 / JCM 11422 / NBRC 100505 / T-27) protein is Probable nicotinate-nucleotide adenylyltransferase.